The following is a 175-amino-acid chain: Shikimate kinase (175 aa).

11–16 (GAGKTT) serves as a coordination point for ATP. T15 contributes to the Mg(2+) binding site. The substrate site is built by D33, R57, and G79. ATP is bound at residue R118. Residue R140 coordinates substrate.

Belongs to the shikimate kinase family. In terms of assembly, monomer. Requires Mg(2+) as cofactor.

The protein localises to the cytoplasm. The enzyme catalyses shikimate + ATP = 3-phosphoshikimate + ADP + H(+). It functions in the pathway metabolic intermediate biosynthesis; chorismate biosynthesis; chorismate from D-erythrose 4-phosphate and phosphoenolpyruvate: step 5/7. Its function is as follows. Catalyzes the specific phosphorylation of the 3-hydroxyl group of shikimic acid using ATP as a cosubstrate. The sequence is that of Shikimate kinase from Bacteroides thetaiotaomicron (strain ATCC 29148 / DSM 2079 / JCM 5827 / CCUG 10774 / NCTC 10582 / VPI-5482 / E50).